We begin with the raw amino-acid sequence, 314 residues long: 2,3-dihydroxyphenylpropionate/2,3-dihydroxicinnamic acid 1,2-dioxygenase (314 aa).

The active-site Proton donor is the H115. H179 functions as the Proton acceptor in the catalytic mechanism.

Belongs to the LigB/MhpB extradiol dioxygenase family. As to quaternary structure, homotetramer. It depends on Fe(2+) as a cofactor.

The enzyme catalyses 3-(2,3-dihydroxyphenyl)propanoate + O2 = (2Z,4E)-2-hydroxy-6-oxonona-2,4-dienedioate + H(+). The catalysed reaction is (2E)-3-(2,3-dihydroxyphenyl)prop-2-enoate + O2 = (2Z,4E,7E)-2-hydroxy-6-oxonona-2,4,7-trienedioate + H(+). Its pathway is aromatic compound metabolism; 3-phenylpropanoate degradation. Functionally, catalyzes the non-heme iron(II)-dependent oxidative cleavage of 2,3-dihydroxyphenylpropionic acid and 2,3-dihydroxicinnamic acid into 2-hydroxy-6-ketononadienedioate and 2-hydroxy-6-ketononatrienedioate, respectively. This chain is 2,3-dihydroxyphenylpropionate/2,3-dihydroxicinnamic acid 1,2-dioxygenase, found in Klebsiella pneumoniae (strain 342).